A 25-amino-acid polypeptide reads, in one-letter code: Small ribosomal subunit protein eS32 (25 aa).

The disordered stretch occupies residues 1–25 (MRAKWRKKRMRRLKRKRRKMRARSK).

It belongs to the eukaryotic ribosomal protein eS32 family. In terms of assembly, component of the small ribosomal subunit.

The polypeptide is Small ribosomal subunit protein eS32 (RpL41) (Spodoptera frugiperda (Fall armyworm)).